Reading from the N-terminus, the 399-residue chain is MIIEDVHYRVVFDSRGNETVECEVVAGEVVAKAMAPSGASTGSGEAVVVSPYRYEEIEEEVSKAIIGMSVFDQESVDEALRELDGTDNFSRIGGNFAITASLAVAKAAAEILGLPLYAYVGGVFAKELPYPLGNVIGGGRHAEGSTSIQEFLVIPVGAKTFFEAQRANAAVHKQLKKIFKERGIFAAKGDEGAWAAQISDEQAFEILSEAIQRVEDELGVKVRMGIDVAATELWDGERYVYSDRKLTTEEQIAYMAELADRYDLLYIEDPLHEKDFEGFAELTKQVKCMVCGDDIFVTNPEIIKKGIEVGAANTVLIKPNQNGTLSGTAKAVKIAKDNGYSVVVSHRSGETEDETLAHLAVAFNAKLIKTGVVGGERISKLNELIRIEELMDKPRMVMI.

Gln149 contacts (2R)-2-phosphoglycerate. Glu191 acts as the Proton donor in catalysis. 3 residues coordinate Mg(2+): Asp227, Glu268, and Asp293. (2R)-2-phosphoglycerate is bound by residues Lys318, Arg347, Ser348, and Lys369. The active-site Proton acceptor is the Lys318.

The protein belongs to the enolase family. It depends on Mg(2+) as a cofactor.

The protein resides in the cytoplasm. It is found in the secreted. The protein localises to the cell surface. The enzyme catalyses (2R)-2-phosphoglycerate = phosphoenolpyruvate + H2O. Its pathway is carbohydrate degradation; glycolysis; pyruvate from D-glyceraldehyde 3-phosphate: step 4/5. Functionally, catalyzes the reversible conversion of 2-phosphoglycerate (2-PG) into phosphoenolpyruvate (PEP). It is essential for the degradation of carbohydrates via glycolysis. The chain is Enolase from Archaeoglobus fulgidus (strain ATCC 49558 / DSM 4304 / JCM 9628 / NBRC 100126 / VC-16).